Reading from the N-terminus, the 357-residue chain is tRNA-specific 2-thiouridylase MnmA (357 aa).

ATP-binding positions include Gly-7–Ser-14 and Met-33. Residues Asn-94–Asp-96 form an interaction with target base in tRNA region. Cys-99 (nucleophile) is an active-site residue. Cys-99 and Cys-195 are oxidised to a cystine. Gly-123 provides a ligand contact to ATP. Residues Lys-145–Gln-147 form an interaction with tRNA region. Residue Cys-195 is the Cysteine persulfide intermediate of the active site. An interaction with tRNA region spans residues Arg-303–Tyr-304.

This sequence belongs to the MnmA/TRMU family.

It localises to the cytoplasm. The catalysed reaction is S-sulfanyl-L-cysteinyl-[protein] + uridine(34) in tRNA + AH2 + ATP = 2-thiouridine(34) in tRNA + L-cysteinyl-[protein] + A + AMP + diphosphate + H(+). Its function is as follows. Catalyzes the 2-thiolation of uridine at the wobble position (U34) of tRNA, leading to the formation of s(2)U34. The polypeptide is tRNA-specific 2-thiouridylase MnmA (Akkermansia muciniphila (strain ATCC BAA-835 / DSM 22959 / JCM 33894 / BCRC 81048 / CCUG 64013 / CIP 107961 / Muc)).